A 392-amino-acid chain; its full sequence is Formate-dependent phosphoribosylglycinamide formyltransferase (392 aa).

Residues 22-23 (EL) and Glu-82 each bind N(1)-(5-phospho-beta-D-ribosyl)glycinamide. Residues Arg-114, Lys-155, 160–165 (SSGKGQ), 195–198 (EGVV), and Glu-203 contribute to the ATP site. The ATP-grasp domain occupies 119–308 (RLAAEELGLP…EFALHVRAFL (190 aa)). The Mg(2+) site is built by Glu-267 and Glu-279. N(1)-(5-phospho-beta-D-ribosyl)glycinamide contacts are provided by residues Asp-286, Lys-355, and 362 to 363 (RR).

This sequence belongs to the PurK/PurT family. Homodimer.

The enzyme catalyses N(1)-(5-phospho-beta-D-ribosyl)glycinamide + formate + ATP = N(2)-formyl-N(1)-(5-phospho-beta-D-ribosyl)glycinamide + ADP + phosphate + H(+). The protein operates within purine metabolism; IMP biosynthesis via de novo pathway; N(2)-formyl-N(1)-(5-phospho-D-ribosyl)glycinamide from N(1)-(5-phospho-D-ribosyl)glycinamide (formate route): step 1/1. In terms of biological role, involved in the de novo purine biosynthesis. Catalyzes the transfer of formate to 5-phospho-ribosyl-glycinamide (GAR), producing 5-phospho-ribosyl-N-formylglycinamide (FGAR). Formate is provided by PurU via hydrolysis of 10-formyl-tetrahydrofolate. The chain is Formate-dependent phosphoribosylglycinamide formyltransferase from Cronobacter sakazakii (strain ATCC BAA-894) (Enterobacter sakazakii).